The primary structure comprises 133 residues: Large-conductance mechanosensitive channel (133 aa).

Transmembrane regions (helical) follow at residues 17-37 and 73-93; these read AFIL…GGAF and IGSF…LYLA.

It belongs to the MscL family. In terms of assembly, homopentamer.

The protein resides in the cell inner membrane. Functionally, channel that opens in response to stretch forces in the membrane lipid bilayer. May participate in the regulation of osmotic pressure changes within the cell. This chain is Large-conductance mechanosensitive channel, found in Synechococcus elongatus (strain ATCC 33912 / PCC 7942 / FACHB-805) (Anacystis nidulans R2).